Reading from the N-terminus, the 186-residue chain is MKMKDELINLIINEGCIKFGHFVLTSGKESNYYIDIKSLITNPKALRIIAKLIKEKAEELNLNYDKIAGPELGAVPIATALSLETNKPLLIVRKKKKEHGTGKVIEGNVQKGDKVLLVEDVTTTGGSVIRAAKILREHGADVVGIFVVVDREEGAKENIEKEGFKFYPLVLVSELFKAAGISKDQS.

5-phospho-alpha-D-ribose 1-diphosphate-binding positions include R93, K94, K97, H99, and 119 to 127 (EDVTTTGGS). Orotate is bound by residues T123 and R151.

It belongs to the purine/pyrimidine phosphoribosyltransferase family. PyrE subfamily. As to quaternary structure, homodimer. It depends on Mg(2+) as a cofactor.

The catalysed reaction is orotidine 5'-phosphate + diphosphate = orotate + 5-phospho-alpha-D-ribose 1-diphosphate. It participates in pyrimidine metabolism; UMP biosynthesis via de novo pathway; UMP from orotate: step 1/2. Its function is as follows. Catalyzes the transfer of a ribosyl phosphate group from 5-phosphoribose 1-diphosphate to orotate, leading to the formation of orotidine monophosphate (OMP). The chain is Orotate phosphoribosyltransferase from Pyrococcus horikoshii (strain ATCC 700860 / DSM 12428 / JCM 9974 / NBRC 100139 / OT-3).